We begin with the raw amino-acid sequence, 330 residues long: Inactive hydroxysteroid dehydrogenase-like protein 1 (330 aa).

Ala-2 is subject to N-acetylalanine. The required for mitochondria translocation stretch occupies residues 2 to 82 (AAVDSFYLLY…SGATDGIGKA (81 aa)). Residues 74–80 (GATDGIG), Asp-125, and Lys-222 contribute to the NADP(+) site.

It belongs to the short-chain dehydrogenases/reductases (SDR) family. 17-beta-HSD 3 subfamily. As to quaternary structure, interacts with STYXL1.

It localises to the mitochondrion. The chain is Inactive hydroxysteroid dehydrogenase-like protein 1 (Hsdl1) from Mus musculus (Mouse).